A 1388-amino-acid polypeptide reads, in one-letter code: MAPGCKTELRSVTNGQSNQPSNEGDAIKVFVRIRPPAERSGSADGEQNLCLSVLSSTSLRLHSNPEPKTFTFDHVADVDTTQESVFATVAKSIVESCMSGYNGTIFAYGQTGSGKTFTMMGPSESDNFSHNLRGVIPRSFEYLFSLIDREKEKAGAGKSFLCKCSFIEIYNEQIYDLLDSASAGLYLREHIKKGVFVVGAVEQVVTSAAEAYQVLSGGWRNRRVASTSMNRESSRSHAVFTITIESMEKSNEIVNIRTSLLNLVDLAGSERQKDTHAEGMRLKEAGNINRSLSCLGQVITALVDVGNGKQRHVCYRDSKLTFLLRDSLGGNAKTAIIANVHPGSRCFGETLSTLNFAQRAKLIKNKAVVNEDTQGNVSQLQAEVKRLKEQLAELASGQTPPESFLTRDKKKTNYMEYFQEAMLFFKKSEQEKKSLIEKVTQLEDLTLKKEKFIQSNKMIVKFREDQIIRLEKLHKESRGGFLPEEQDRLLSELRNEIQTLREQIEHHPRVAKYAMENHSLREENRRLRLLEPVKRAQEMDAQTIAKLEKAFSEISGMEKSDKNQQGFSPKAQKEPCLFANTEKLKAQLLQIQTELNNSKQEYEEFKELTRKRQLELESELQSLQKANLNLENLLEATKACKRQEVSQLNKIHAETLKIITTPTKAYQLHSRPVPKLSPEMGSFGSLYTQNSSILDNDILNEPVPPEMNEQAFEAISEELRTVQEQMSALQAKLDEEEHKNLKLQQHVDKLEHHSTQMQELFSSERIDWTKQQEELLSQLNVLEKQLQETQTKNDFLKSEVHDLRVVLHSADKELSSVKLEYSSFKTNQEKEFNKLSERHMHVQLQLDNLRLENEKLLESKACLQDSYDNLQEIMKFEIDQLSRNLQNFKKENETLKSDLNNLMELLEAEKERNNKLSLQFEEDKENSSKEILKVLEAVRQEKQKETAKCEQQMAKVQKLEESLLATEKVISSLEKSRDSDKKVVADLMNQIQELRTSVCEKTETIDTLKQELKDINCKYNSALVDREESRVLIKKQEVDILDLKETLRLRILSEDIERDMLCEDLAHATEQLNMLTEASKKHSGLLQSAQEELTKKEALIQELQHKLNQKKEEVEQKKNEYNFKMRQLEHVMDSAAEDPQSPKTPPHFQTHLAKLLETQEQEIEDGRASKTSLEHLVTKLNEDREVKNAEILRMKEQLREMENLRLESQQLIEKNWLLQGQLDDIKRQKENSDQNHPDNQQLKNEQEESIKERLAKSKIVEEMLKMKADLEEVQSALYNKEMECLRMTDEVERTQTLESKAFQEKEQLRSKLEEMYEERERTSQEMEMLRKQVECLAEENGKLVGHQNLHQKIQYVVRLKKENVRLAEETEKLRAENVFLKEKKRSES.

Residues 1–25 (MAPGCKTELRSVTNGQSNQPSNEGD) form a disordered region. Positions 10 to 22 (RSVTNGQSNQPSN) are enriched in polar residues. The 338-residue stretch at 26–363 (AIKVFVRIRP…LNFAQRAKLI (338 aa)) folds into the Kinesin motor domain. 109–116 (GQTGSGKT) contributes to the ATP binding site. Residues 368–1388 (VVNEDTQGNV…FLKEKKRSES (1021 aa)) are a coiled coil. Residue Thr399 is modified to Phosphothreonine. Residue Ser568 is modified to Phosphoserine. Lys1009 is modified (N6-acetyllysine). 2 positions are modified to phosphoserine: Ser1141 and Ser1169. The segment at 1228 to 1250 (QKENSDQNHPDNQQLKNEQEESI) is disordered.

Belongs to the TRAFAC class myosin-kinesin ATPase superfamily. Kinesin family. KLP2 subfamily. Interacts with MKI67 and TPX2. Expressed in testis, colon, thymus and in breast cancer.

It is found in the cytoplasm. The protein localises to the cytoskeleton. Its subcellular location is the spindle. Functionally, plus-end directed kinesin-like motor enzyme involved in mitotic spindle assembly. The sequence is that of Kinesin-like protein KIF15 (KIF15) from Homo sapiens (Human).